The primary structure comprises 399 residues: 1-deoxy-D-xylulose 5-phosphate reductoisomerase (399 aa).

Residues Thr-11, Gly-12, Ser-13, Ile-14, and Asn-125 each contribute to the NADPH site. Residue Lys-126 participates in 1-deoxy-D-xylulose 5-phosphate binding. Glu-127 serves as a coordination point for NADPH. Asp-151 serves as a coordination point for Mn(2+). 4 residues coordinate 1-deoxy-D-xylulose 5-phosphate: Ser-152, Glu-153, Ser-186, and His-209. Glu-153 provides a ligand contact to Mn(2+). Gly-215 is a binding site for NADPH. Residues Ser-222, Asn-227, Lys-228, and Glu-231 each coordinate 1-deoxy-D-xylulose 5-phosphate. Glu-231 contacts Mn(2+).

This sequence belongs to the DXR family. Mg(2+) serves as cofactor. The cofactor is Mn(2+).

The catalysed reaction is 2-C-methyl-D-erythritol 4-phosphate + NADP(+) = 1-deoxy-D-xylulose 5-phosphate + NADPH + H(+). The protein operates within isoprenoid biosynthesis; isopentenyl diphosphate biosynthesis via DXP pathway; isopentenyl diphosphate from 1-deoxy-D-xylulose 5-phosphate: step 1/6. In terms of biological role, catalyzes the NADPH-dependent rearrangement and reduction of 1-deoxy-D-xylulose-5-phosphate (DXP) to 2-C-methyl-D-erythritol 4-phosphate (MEP). This Acinetobacter baumannii (strain SDF) protein is 1-deoxy-D-xylulose 5-phosphate reductoisomerase.